Here is a 137-residue protein sequence, read N- to C-terminus: ATP synthase epsilon chain, chloroplastic (137 aa).

Belongs to the ATPase epsilon chain family. As to quaternary structure, F-type ATPases have 2 components, CF(1) - the catalytic core - and CF(0) - the membrane proton channel. CF(1) has five subunits: alpha(3), beta(3), gamma(1), delta(1), epsilon(1). CF(0) has three main subunits: a, b and c.

It is found in the plastid. The protein localises to the chloroplast thylakoid membrane. Functionally, produces ATP from ADP in the presence of a proton gradient across the membrane. The chain is ATP synthase epsilon chain, chloroplastic from Pinus koraiensis (Korean pine).